A 264-amino-acid chain; its full sequence is 3-methyl-2-oxobutanoate hydroxymethyltransferase (264 aa).

Positions 45 and 84 each coordinate Mg(2+). 3-methyl-2-oxobutanoate contacts are provided by residues 45–46, Asp84, and Lys113; that span reads DS. Position 115 (Glu115) interacts with Mg(2+). Glu182 functions as the Proton acceptor in the catalytic mechanism.

This sequence belongs to the PanB family. As to quaternary structure, homodecamer; pentamer of dimers. The cofactor is Mg(2+).

The protein localises to the cytoplasm. It catalyses the reaction 3-methyl-2-oxobutanoate + (6R)-5,10-methylene-5,6,7,8-tetrahydrofolate + H2O = 2-dehydropantoate + (6S)-5,6,7,8-tetrahydrofolate. The protein operates within cofactor biosynthesis; (R)-pantothenate biosynthesis; (R)-pantoate from 3-methyl-2-oxobutanoate: step 1/2. Its function is as follows. Catalyzes the reversible reaction in which hydroxymethyl group from 5,10-methylenetetrahydrofolate is transferred onto alpha-ketoisovalerate to form ketopantoate. This is 3-methyl-2-oxobutanoate hydroxymethyltransferase from Caldicellulosiruptor saccharolyticus (strain ATCC 43494 / DSM 8903 / Tp8T 6331).